The primary structure comprises 150 residues: Ribosome maturation factor RimP (150 aa).

This sequence belongs to the RimP family.

It is found in the cytoplasm. Functionally, required for maturation of 30S ribosomal subunits. The protein is Ribosome maturation factor RimP of Thermotoga maritima (strain ATCC 43589 / DSM 3109 / JCM 10099 / NBRC 100826 / MSB8).